We begin with the raw amino-acid sequence, 132 residues long: MKYCFVFFVTLICLIANCSARPEGDKGLSAAPTDGKQIERASDKTSEENDGNTNAQGDSNSRLQDFFKQIKQFLDSLNPFKKLLGSGASVPQLPDLPTTPSLPDMPLKPEAILQNPSVPSLPNIPKPSLGLP.

The N-terminal stretch at 1-20 is a signal peptide; it reads MKYCFVFFVTLICLIANCSA. Disordered stretches follow at residues 23–62 and 87–132; these read EGDK…SNSR and GASV…LGLP. Basic and acidic residues predominate over residues 36–47; that stretch reads KQIERASDKTSE. The span at 51-62 shows a compositional bias: polar residues; the sequence is GNTNAQGDSNSR. The span at 91-105 shows a compositional bias: low complexity; it reads PQLPDLPTTPSLPDM.

It is found in the secreted. The sequence is that of Proline-rich protein sgp2 (sgp2) from Glossina morsitans morsitans (Savannah tsetse fly).